The chain runs to 207 residues: Thymidylate kinase (207 aa).

7–14 provides a ligand contact to ATP; the sequence is GPEGAGKS.

This sequence belongs to the thymidylate kinase family.

The catalysed reaction is dTMP + ATP = dTDP + ADP. Its function is as follows. Phosphorylation of dTMP to form dTDP in both de novo and salvage pathways of dTTP synthesis. This chain is Thymidylate kinase, found in Pseudomonas putida (strain W619).